A 154-amino-acid chain; its full sequence is Methylglyoxal synthase (154 aa).

Residues 6 to 154 enclose the MGS-like domain; it reads GALPSRKQIA…AYIAERTKKL (149 aa). Residues histidine 19, lysine 23, 45-48, and 65-66 contribute to the substrate site; these read TGTT and SG. The active-site Proton donor/acceptor is the aspartate 71. Histidine 98 serves as a coordination point for substrate.

Belongs to the methylglyoxal synthase family.

The catalysed reaction is dihydroxyacetone phosphate = methylglyoxal + phosphate. In terms of biological role, catalyzes the formation of methylglyoxal from dihydroxyacetone phosphate. The chain is Methylglyoxal synthase from Saccharophagus degradans (strain 2-40 / ATCC 43961 / DSM 17024).